The primary structure comprises 358 residues: MTEHFDARGTRDAQTGRDLHSFIAGLPKAELHVHHVGSASPRIVSELAARHPDSSVPTDPEALADYFTFTDFAHFIKVYLSVVDLIRTPEDVRLLTYEVARELARQQVRYAELTITPFSSTRRGIDERAFMDAIEDARKSAEAEFGTVLRWCFDIPGEAGLESAEETVRLATDDRLRPEGLVSFGLGGPEIGVPRPQFKPYFDRAIAAGLRSVPHAGETTGPETVWDALTDLRAERIGHGTSSAQDPKLLAHLAEHRIPLEVCPTSNIATRAVRTLDEHPVKEFVRAGVVVTINSDDPPMFGTDLNNEYAIAARLLDLDERGLAGLAKNSVEASFLDAAGKARIAAEIDTYTAAWLAP.

Zn(2+) contacts are provided by His-32 and His-34. Residues Arg-87, Asp-154, and Gly-188 each coordinate substrate. His-215 is a Zn(2+) binding site. Residue Glu-218 is the Proton donor of the active site. Position 296 (Asp-296) interacts with Zn(2+).

Belongs to the metallo-dependent hydrolases superfamily. Adenosine and AMP deaminases family. Zn(2+) serves as cofactor.

It catalyses the reaction 6-amino-6-deoxyfutalosine + H2O + H(+) = futalosine + NH4(+). It functions in the pathway quinol/quinone metabolism; menaquinone biosynthesis. Functionally, catalyzes the deamination of aminodeoxyfutalosine (AFL) into futalosine (FL), a step in the biosynthesis of menaquinone (MK, vitamin K2). To a lesser extent, can also deaminate adenosine, 5'-methylthioadenosine, 5'-deoxyadenosine, and 2'-deoxyadenosine. This chain is Aminodeoxyfutalosine deaminase (add2), found in Streptomyces avermitilis (strain ATCC 31267 / DSM 46492 / JCM 5070 / NBRC 14893 / NCIMB 12804 / NRRL 8165 / MA-4680).